Consider the following 502-residue polypeptide: Aspartyl/glutamyl-tRNA(Asn/Gln) amidotransferase subunit B (502 aa).

Belongs to the GatB/GatE family. GatB subfamily. In terms of assembly, heterotrimer of A, B and C subunits.

It carries out the reaction L-glutamyl-tRNA(Gln) + L-glutamine + ATP + H2O = L-glutaminyl-tRNA(Gln) + L-glutamate + ADP + phosphate + H(+). The enzyme catalyses L-aspartyl-tRNA(Asn) + L-glutamine + ATP + H2O = L-asparaginyl-tRNA(Asn) + L-glutamate + ADP + phosphate + 2 H(+). Its function is as follows. Allows the formation of correctly charged Asn-tRNA(Asn) or Gln-tRNA(Gln) through the transamidation of misacylated Asp-tRNA(Asn) or Glu-tRNA(Gln) in organisms which lack either or both of asparaginyl-tRNA or glutaminyl-tRNA synthetases. The reaction takes place in the presence of glutamine and ATP through an activated phospho-Asp-tRNA(Asn) or phospho-Glu-tRNA(Gln). The sequence is that of Aspartyl/glutamyl-tRNA(Asn/Gln) amidotransferase subunit B from Arthrobacter sp. (strain FB24).